The chain runs to 30 residues: U10-ctenitoxin-Co1b (30 aa).

2 cysteine pairs are disulfide-bonded: C2/C17 and C9/C22.

As to expression, expressed by the venom gland.

It is found in the secreted. Functionally, antagonist of L-type calcium channels (Cav1/CACNA1). The sequence is that of U10-ctenitoxin-Co1b from Ctenus ornatus (Brazilian spider).